Here is a 351-residue protein sequence, read N- to C-terminus: Ribosomal RNA small subunit methyltransferase H (351 aa).

Residues 48 to 50 (GGY), D67, F94, D115, and Q122 contribute to the S-adenosyl-L-methionine site. The disordered stretch occupies residues 274 to 351 (AAQASRHVPG…PAPQGRGPRR (78 aa)).

It belongs to the methyltransferase superfamily. RsmH family.

The protein resides in the cytoplasm. It catalyses the reaction cytidine(1402) in 16S rRNA + S-adenosyl-L-methionine = N(4)-methylcytidine(1402) in 16S rRNA + S-adenosyl-L-homocysteine + H(+). Its function is as follows. Specifically methylates the N4 position of cytidine in position 1402 (C1402) of 16S rRNA. This Methylorubrum extorquens (strain ATCC 14718 / DSM 1338 / JCM 2805 / NCIMB 9133 / AM1) (Methylobacterium extorquens) protein is Ribosomal RNA small subunit methyltransferase H.